The chain runs to 413 residues: Multifunctional CCA protein (413 aa).

2 residues coordinate ATP: Gly8 and Arg11. Residues Gly8 and Arg11 each contribute to the CTP site. 2 residues coordinate Mg(2+): Asp21 and Asp23. ATP-binding residues include Arg91, Arg137, and Arg140. 3 residues coordinate CTP: Arg91, Arg137, and Arg140. The HD domain maps to 228-329 (TGVHTLMTLS…VKLFDAIDAW (102 aa)).

The protein belongs to the tRNA nucleotidyltransferase/poly(A) polymerase family. Bacterial CCA-adding enzyme type 1 subfamily. As to quaternary structure, monomer. Can also form homodimers and oligomers. It depends on Mg(2+) as a cofactor. Ni(2+) serves as cofactor.

The catalysed reaction is a tRNA precursor + 2 CTP + ATP = a tRNA with a 3' CCA end + 3 diphosphate. It catalyses the reaction a tRNA with a 3' CCA end + 2 CTP + ATP = a tRNA with a 3' CCACCA end + 3 diphosphate. Its function is as follows. Catalyzes the addition and repair of the essential 3'-terminal CCA sequence in tRNAs without using a nucleic acid template. Adds these three nucleotides in the order of C, C, and A to the tRNA nucleotide-73, using CTP and ATP as substrates and producing inorganic pyrophosphate. tRNA 3'-terminal CCA addition is required both for tRNA processing and repair. Also involved in tRNA surveillance by mediating tandem CCA addition to generate a CCACCA at the 3' terminus of unstable tRNAs. While stable tRNAs receive only 3'-terminal CCA, unstable tRNAs are marked with CCACCA and rapidly degraded. The chain is Multifunctional CCA protein from Salmonella agona (strain SL483).